The chain runs to 567 residues: Phenylalanine ammonia-lyase (567 aa).

Y78 serves as the catalytic Proton donor/acceptor. Residues 167–169 constitute a cross-link (5-imidazolinone (Ala-Gly)); it reads ASG. The residue at position 168 (S168) is a 2,3-didehydroalanine (Ser). (E)-cinnamate-binding residues include N223, Q311, R317, N347, K419, E448, and N451.

Belongs to the PAL/histidase family. As to quaternary structure, homotetramer. Contains an active site 4-methylidene-imidazol-5-one (MIO), which is formed autocatalytically by cyclization and dehydration of residues Ala-Ser-Gly.

The protein localises to the cytoplasm. The catalysed reaction is L-phenylalanine = (E)-cinnamate + NH4(+). It functions in the pathway phenylpropanoid metabolism; trans-cinnamate biosynthesis; trans-cinnamate from L-phenylalanine: step 1/1. Catalyzes the non-oxidative deamination of L-phenylalanine to form trans-cinnamic acid, the first step in the phenylpropanoid pathway. The protein is Phenylalanine ammonia-lyase of Trichormus variabilis (strain ATCC 29413 / PCC 7937) (Anabaena variabilis).